A 204-amino-acid chain; its full sequence is Serotype 3 fimbrial subunit (204 aa).

An N-terminal signal peptide occupies residues 1–25 (MSKFSYPALRAALILAASPVLPALA). Cys-41 and Cys-84 are oxidised to a cystine.

Belongs to the fimbrial protein family.

The protein localises to the fimbrium. Bordetella pertussis is the causative agent of whooping cough. An essential step in the disease process is the attachment of the bacteria to the ciliated epithelium of the respiratory tract, enabling the organism to resist normal host-clearance mechanisms. It is unclear which bacterial cell surface component are responsible for adherence but the fimbriae of B.pertussis are prime candidates for being involved in this process. In Bordetella pertussis (strain Tohama I / ATCC BAA-589 / NCTC 13251), this protein is Serotype 3 fimbrial subunit (fim3).